The following is a 246-amino-acid chain: UPF0309 protein TTE0306 (246 aa).

In terms of domain architecture, SIS spans 31–212 (ITESLISEDS…EAEIITNMLE (182 aa)).

Belongs to the UPF0309 family.

This is UPF0309 protein TTE0306 from Caldanaerobacter subterraneus subsp. tengcongensis (strain DSM 15242 / JCM 11007 / NBRC 100824 / MB4) (Thermoanaerobacter tengcongensis).